A 528-amino-acid polypeptide reads, in one-letter code: Na(+)/H(+) antiporter NhaB (528 aa).

11 helical membrane-spanning segments follow: residues 23-43 (VAII…NPFV), 45-65 (GWLL…CYPL), 90-110 (LVAN…IYFM), 136-156 (CFAA…AVVI), 204-224 (LLMH…VGEP), 237-257 (FGEF…CGLI), 305-325 (GIIA…VGLI), 350-370 (EEAL…AVII), 392-412 (LALF…VFVG), 450-470 (ATPN…APLI), and 479-499 (VMAL…IMFF).

It belongs to the NhaB Na(+)/H(+) (TC 2.A.34) antiporter family.

It localises to the cell inner membrane. It carries out the reaction 2 Na(+)(in) + 3 H(+)(out) = 2 Na(+)(out) + 3 H(+)(in). Its function is as follows. Na(+)/H(+) antiporter that extrudes sodium in exchange for external protons. Can also transport lithium and potassium. This chain is Na(+)/H(+) antiporter NhaB, found in Vibrio parahaemolyticus serotype O3:K6 (strain RIMD 2210633).